We begin with the raw amino-acid sequence, 739 residues long: Poly(A) polymerase alpha (739 aa).

A compositionally biased stretch (low complexity) spans 1-17; sequence MPFPVTTQGSQQTQPPQ. The disordered stretch occupies residues 1 to 22; sequence MPFPVTTQGSQQTQPPQRHYGI. Ser-10 and Ser-24 each carry phosphoserine. ATP is bound by residues 100-102, Thr-109, 113-115, Asp-167, Lys-228, Tyr-237, and 246-247; these read FGS, DID, and GV. Mg(2+)-binding residues include Asp-113, Asp-115, and Asp-167. Residues Lys-444, Lys-445, Lys-506, and Lys-507 each participate in a glycyl lysine isopeptide (Lys-Gly) (interchain with G-Cter in SUMO) cross-link. Positions 490 to 507 match the Nuclear localization signal 1 motif; it reads RKQLHQLLPSHVLQKRKK. The ser/Thr-rich stretch occupies residues 508 to 643; it reads HSTEGVKLTA…TKVPNPIVGV (136 aa). The segment covering 523–534 has biased composition (low complexity); sequence LDLSMDSDNSMS. Residues 523-725 form a disordered region; that stretch reads LDLSMDSDNS…SDIPALPANP (203 aa). The span at 535 to 557 shows a compositional bias: polar residues; sequence VPSPTSAMKTSPLNSSGSSQGRN. A Phosphoserine; by MAPK modification is found at Ser-537. A Phosphoserine modification is found at Ser-558. Residues 566 to 582 show a composition bias toward polar residues; the sequence is ASVTSIQASEVSVPQAN. 2 stretches are compositionally biased toward low complexity: residues 583–594 and 611–622; these read SSESPGGPSSES and TVSRVVSSTRLV. N6-acetyllysine occurs at positions 635 and 644. The Nuclear localization signal 2 signature appears at 644 to 659; it reads KRTSSPNKEESPKKTK. 2 stretches are compositionally biased toward basic and acidic residues: residues 650–660 and 676–686; these read NKEESPKKTKT and GHDKTETKEQV. The segment at 671-739 is required for interaction with NUDT21; that stretch reads CLALSGHDKT…KNSIKLRLNR (69 aa). Positions 691 to 715 are enriched in polar residues; sequence SAVQSETVPASASLLASQKTSSTDL. Lys-730 carries the N6-acetyllysine; alternate modification. Residue Lys-730 forms a Glycyl lysine isopeptide (Lys-Gly) (interchain with G-Cter in SUMO); alternate linkage. Ser-732 carries the post-translational modification Phosphoserine. Lys-734 bears the N6-acetyllysine; alternate mark. Residue Lys-734 forms a Glycyl lysine isopeptide (Lys-Gly) (interchain with G-Cter in SUMO); alternate linkage.

The protein belongs to the poly(A) polymerase family. Monomer. Found in a complex with CPSF1, FIP1L1 and PAPOLA. Interacts with AHCYL1 and FIP1L1; the interaction with AHCYL1 seems to increase interaction with FIP1L1. Interacts with NUDT21; the interaction is diminished by acetylation. Interacts with KPNB1; the interaction promotes PAP nuclear import and is inhibited by acetylation of PAP. The cofactor is Mg(2+). It depends on Mn(2+) as a cofactor. Polysumoylated. Varying sumoylation depending on tissue- and cell-type. Highly sumoylated in bladder and NIH 3T3 cells. Sumoylation is required for nuclear localization and enhances PAP stability. Desumoylated by SENP1. Inhibits polymerase activity. Post-translationally, hyperphosphorylation on multiple CDK2 consensus and non-consensus sites in the C-terminal Ser/Thr-rich region represses PAP activity in late M-phase. Phosphorylation/dephosphorylation may regulate the interaction between PAP and CPSF. In terms of processing, acetylated in the C-terminus. Acetylation decreases interaction with NUDT21 and KPNB1, and inhibits nuclear localization through inhibiting binding to the importin alpha/beta complex. In terms of tissue distribution, expressed in brain, thymus, lung, kidney, bladder, testis and spleen.

The protein localises to the nucleus. It carries out the reaction RNA(n) + ATP = RNA(n)-3'-adenine ribonucleotide + diphosphate. Polymerase that creates the 3'-poly(A) tail of mRNA's. Also required for the endoribonucleolytic cleavage reaction at some polyadenylation sites. May acquire specificity through interaction with a cleavage and polyadenylation specificity factor (CPSF) at its C-terminus. The sequence is that of Poly(A) polymerase alpha (Papola) from Mus musculus (Mouse).